A 494-amino-acid chain; its full sequence is DEAD-box ATP-dependent RNA helicase CshA (494 aa).

The Q motif motif lies at 3 to 31 (ITFQDFNLSSDLMKAINRMGFEEATPIQA). One can recognise a Helicase ATP-binding domain in the interval 34-204 (IPLGLSNKDV…ERFMTEPEHV (171 aa)). Residue 47–54 (AQTGTGKT) coordinates ATP. The DEAD box motif lies at 152 to 155 (DEAD). The Helicase C-terminal domain maps to 215 to 375 (NIQQFYLEVQ…RMKEPTLDEA (161 aa)). The tract at residues 413–494 (VTVVAAAIKM…SGDRRQKKSY (82 aa)) is required for dimerization or oligomerization. The interval 429–494 (DTPVRLTDEA…SGDRRQKKSY (66 aa)) is disordered. Over residues 443-452 (KRYKNQRSSK) the composition is skewed to basic residues. The span at 473 to 488 (SYDKKRSNDRRSSGDR) shows a compositional bias: basic and acidic residues.

It belongs to the DEAD box helicase family. CshA subfamily. In terms of assembly, homodimer or oligomer. May interact with RNA helicases CshB and DbpA (DeaD). Probably a component of the RNA degradosome complex composed of rny, rnjA, rnjB, pnp, pfkA and eno, and possibly also rnpA (although rnjA and rnjB's presence is unclear). Interacts with ribosomal proteins L1 and L3 (rplA and rplC) and the protein component of RNase RnpA. Interacts with the RNA polymerase core. It depends on Mg(2+) as a cofactor.

The protein localises to the cytoplasm. It localises to the nucleoid. The protein resides in the cell membrane. It carries out the reaction ATP + H2O = ADP + phosphate + H(+). With respect to regulation, RNA helicase activity is inhibited by EDTA. Functionally, the most abundant DEAD-box RNA helicase. An ATP-dependent RNA helicase with RNA-dependent ATPase activity. May work in conjunction with the cold shock proteins to ensure proper initiation of transcription at low and optimal temperatures. In vitro, unwinds dsRNA in both 5'- and 3'- directions. Plays a role in ribosomal 50S subunit assembly. Its deletion leads to changes in mRNA levels for over 200 transcripts. This is DEAD-box ATP-dependent RNA helicase CshA from Bacillus subtilis (strain 168).